Here is a 235-residue protein sequence, read N- to C-terminus: Uridylate kinase (235 aa).

9–12 (KLSG) lines the ATP pocket. Position 51 (Gly51) interacts with UMP. Residues Gly52 and Arg56 each contribute to the ATP site. Residues Asp71 and 132–139 (TGNPYFTT) contribute to the UMP site. Positions 159, 165, and 168 each coordinate ATP.

This sequence belongs to the UMP kinase family. Homohexamer.

Its subcellular location is the cytoplasm. It carries out the reaction UMP + ATP = UDP + ADP. Its pathway is pyrimidine metabolism; CTP biosynthesis via de novo pathway; UDP from UMP (UMPK route): step 1/1. Its activity is regulated as follows. Inhibited by UTP. Its function is as follows. Catalyzes the reversible phosphorylation of UMP to UDP. The sequence is that of Uridylate kinase from Flavobacterium psychrophilum (strain ATCC 49511 / DSM 21280 / CIP 103535 / JIP02/86).